The sequence spans 173 residues: RNA silencing suppressor p19 (173 aa).

Positions 1-21 (MERAIQRSDAREQANSERWDG) are enriched in basic and acidic residues. A disordered region spans residues 1–34 (MERAIQRSDAREQANSERWDGRCGGTITPFKLPD).

This sequence belongs to the tombusvirus protein p19 family. Homodimer.

Functionally, viral suppressor of RNA silencing which binds specifically to silencing RNAs (siRNAs). Acts as a molecular caliper to specifically select siRNAs based on the length of the duplex region of the RNA. The chain is RNA silencing suppressor p19 from Cucumis sativus (Cucumber).